The following is a 485-amino-acid chain: Transcription factor ETV6 (485 aa).

Polar residues predominate over residues 1–10 (MSETPAQSSI). The tract at residues 1 to 32 (MSETPAQSSIKQERISYTPPESPVASHRSSTP) is disordered. At Lys-11 the chain carries N6-acetyllysine; alternate. Lys-11 is covalently cross-linked (Glycyl lysine isopeptide (Lys-Gly) (interchain with G-Cter in SUMO2); alternate). The residue at position 18 (Thr-18) is a Phosphothreonine. Position 22 is a phosphoserine (Ser-22). One can recognise a PNT domain in the interval 41–125 (ALRMEEDSIH…ELLQHILKQR (85 aa)). The segment at 157–210 (NCVQRTPRTPAESVHHNPPTIELLHRPRSPITTNHRPSPDPEQQRPQRSPLDNM) is disordered. Thr-165 is modified (phosphothreonine). Residues Ser-215, Ser-240, and Ser-251 each carry the phosphoserine modification. Lys-284 is covalently cross-linked (Glycyl lysine isopeptide (Lys-Gly) (interchain with G-Cter in SUMO2)). Lys-298 is subject to N6-acetyllysine; alternate. A Glycyl lysine isopeptide (Lys-Gly) (interchain with G-Cter in SUMO2); alternate cross-link involves residue Lys-298. Ser-319 carries the phosphoserine modification. Residues 335–416 (RLLWDYVYQL…PGQRLLFRFM (82 aa)) constitute a DNA-binding region (ETS). Residues Lys-399 and Lys-417 each participate in a glycyl lysine isopeptide (Lys-Gly) (interchain with G-Cter in SUMO2) cross-link. A disordered region spans residues 440–485 (EQTYQEDEPTIASPVGWPRGNLPTGTAGGVMEAGELGVAVKEETRE).

It belongs to the ETS family. In terms of assembly, can form homodimers or heterodimers with TEL2 or FLI1. Interacts with L3MBTL1 and HDAC9.

Its subcellular location is the nucleus. Functionally, transcriptional repressor; binds to the DNA sequence 5'-CCGGAAGT-3'. Plays a role in hematopoiesis and malignant transformation. The sequence is that of Transcription factor ETV6 (Etv6) from Mus musculus (Mouse).